The primary structure comprises 79 residues: Acyl carrier protein (79 aa).

The Carrier domain maps to A2–V77. Residue S37 is modified to O-(pantetheine 4'-phosphoryl)serine.

It belongs to the acyl carrier protein (ACP) family. In terms of processing, 4'-phosphopantetheine is transferred from CoA to a specific serine of apo-ACP by AcpS. This modification is essential for activity because fatty acids are bound in thioester linkage to the sulfhydryl of the prosthetic group.

Its subcellular location is the cytoplasm. Its pathway is lipid metabolism; fatty acid biosynthesis. Functionally, carrier of the growing fatty acid chain in fatty acid biosynthesis. This Endomicrobium trichonymphae protein is Acyl carrier protein.